A 64-amino-acid chain; its full sequence is Alpha-conotoxin CnIC (64 aa).

The first 21 residues, 1–21, serve as a signal peptide directing secretion; the sequence is MGMRMMFTVFLLVVLTTTVVS. The propeptide occupies 22–47; that stretch reads FPSDSASDVRDDEAKDERSDMYKSKR. Position 48 is a deamidated asparagine; in CnIH; partial (N48). Disulfide bonds link C51/C56 and C52/C62. C62 bears the Cysteine amide mark.

It belongs to the conotoxin A superfamily. In terms of tissue distribution, expressed by the venom duct.

It is found in the secreted. Its function is as follows. Alpha-conotoxins act on postsynaptic membranes, they bind to the nicotinic acetylcholine receptors (nAChR) and thus inhibit them. The polypeptide is Alpha-conotoxin CnIC (Conus consors (Singed cone)).